We begin with the raw amino-acid sequence, 487 residues long: Putative B3 domain-containing protein At1g78640 (487 aa).

2 DNA-binding regions (TF-B3) span residues arginine 171–threonine 269 and arginine 379–valine 474.

Its subcellular location is the nucleus. This is Putative B3 domain-containing protein At1g78640 from Arabidopsis thaliana (Mouse-ear cress).